Consider the following 173-residue polypeptide: Crossover junction endodeoxyribonuclease RuvC (173 aa).

Active-site residues include Asp8, Glu67, and Asp139. The Mg(2+) site is built by Asp8, Glu67, and Asp139.

It belongs to the RuvC family. As to quaternary structure, homodimer which binds Holliday junction (HJ) DNA. The HJ becomes 2-fold symmetrical on binding to RuvC with unstacked arms; it has a different conformation from HJ DNA in complex with RuvA. In the full resolvosome a probable DNA-RuvA(4)-RuvB(12)-RuvC(2) complex forms which resolves the HJ. Requires Mg(2+) as cofactor.

It is found in the cytoplasm. It catalyses the reaction Endonucleolytic cleavage at a junction such as a reciprocal single-stranded crossover between two homologous DNA duplexes (Holliday junction).. Its function is as follows. The RuvA-RuvB-RuvC complex processes Holliday junction (HJ) DNA during genetic recombination and DNA repair. Endonuclease that resolves HJ intermediates. Cleaves cruciform DNA by making single-stranded nicks across the HJ at symmetrical positions within the homologous arms, yielding a 5'-phosphate and a 3'-hydroxyl group; requires a central core of homology in the junction. The consensus cleavage sequence is 5'-(A/T)TT(C/G)-3'. Cleavage occurs on the 3'-side of the TT dinucleotide at the point of strand exchange. HJ branch migration catalyzed by RuvA-RuvB allows RuvC to scan DNA until it finds its consensus sequence, where it cleaves and resolves the cruciform DNA. In Shewanella sp. (strain MR-4), this protein is Crossover junction endodeoxyribonuclease RuvC.